A 422-amino-acid chain; its full sequence is Glutamyl-tRNA reductase (422 aa).

Residues 49–52 (TCNR), S110, 115–117 (EPQ), and Q121 contribute to the substrate site. Residue C50 is the Nucleophile of the active site. Residue 190-195 (GAGETI) coordinates NADP(+).

This sequence belongs to the glutamyl-tRNA reductase family. Homodimer.

The catalysed reaction is (S)-4-amino-5-oxopentanoate + tRNA(Glu) + NADP(+) = L-glutamyl-tRNA(Glu) + NADPH + H(+). It functions in the pathway porphyrin-containing compound metabolism; protoporphyrin-IX biosynthesis; 5-aminolevulinate from L-glutamyl-tRNA(Glu): step 1/2. Functionally, catalyzes the NADPH-dependent reduction of glutamyl-tRNA(Glu) to glutamate 1-semialdehyde (GSA). The polypeptide is Glutamyl-tRNA reductase (Colwellia psychrerythraea (strain 34H / ATCC BAA-681) (Vibrio psychroerythus)).